Here is an 86-residue protein sequence, read N- to C-terminus: Cell division topological specificity factor (86 aa).

Belongs to the MinE family.

Prevents the cell division inhibition by proteins MinC and MinD at internal division sites while permitting inhibition at polar sites. This ensures cell division at the proper site by restricting the formation of a division septum at the midpoint of the long axis of the cell. This Shewanella woodyi (strain ATCC 51908 / MS32) protein is Cell division topological specificity factor.